The chain runs to 260 residues: OCIA domain-containing protein 1 (260 aa).

The region spanning Met1 to Glu110 is the OCIA domain. Residues Asp146–Asp260 form a disordered region. Positions Pro155–Asp164 are enriched in polar residues. Over residues Glu205–Tyr215 the composition is skewed to basic and acidic residues.

Belongs to the OCIAD1 family.

In Drosophila pseudoobscura pseudoobscura (Fruit fly), this protein is OCIA domain-containing protein 1.